The sequence spans 393 residues: MSQNLFNVEDYRKLRQKRLPKMVYDYLEGGAEDEYGVKHNRDVFQQWRFKPKRLVDVSRRSLQAEVLGKRQSMPLLIGPTGLNGALWPKGDLALARAATKAGIPFVLSTASNMSIEDLARQCDGDLWFQLYVIHREIAQGMVLKALHTGYTTLVLTTDVAVNGYRERDLHNRFKIPMSYSAKVVLDGCLHPRWSLDFVRHGMPQLANFVSSQTSSLEMQAALMSRQMDASFNWEALRWLRDLWPHKLLVKGLLSAEDADRCIAEGADGVILSNHGGRQLDCAISPMEVLAQSVAKTGKPVLIDSGFRRGSDIVKALALGAEAVLLGRATLYGLAARGETGVDEVLTLLKADIDRTLAQIGCPDITSLSPDYLQNEGVTNTAPVDHLIGKGTHA.

The FMN hydroxy acid dehydrogenase domain occupies 1–377; the sequence is MSQNLFNVED…SPDYLQNEGV (377 aa). (S)-mandelate is bound at residue Y26. FMN contacts are provided by residues 79–81, S108, and Q129; that span reads PTG. Y131 provides a ligand contact to (S)-mandelate. T156 lines the FMN pocket. R165 lines the (S)-mandelate pocket. An FMN-binding site is contributed by K250. (S)-mandelate contacts are provided by H274 and R277. H274 acts as the Proton acceptor in catalysis. FMN-binding positions include 303–307 and 326–327; these read DSGFR and GR.

Belongs to the FMN-dependent alpha-hydroxy acid dehydrogenase family. As to quaternary structure, homotetramer. It depends on FMN as a cofactor.

Its subcellular location is the cell inner membrane. It carries out the reaction (S)-mandelate + A = phenylglyoxylate + AH2. It functions in the pathway aromatic compound metabolism; (R)-mandelate degradation; benzoate from (R)-mandelate: step 2/4. Its function is as follows. Catalyzes the dehydrogenation of (S)-mandelate to phenylglyoxylate (benzoylformate). Is likely involved in the utilization of mandelate as a sole source of carbon and energy for growth. Active in vitro with the artificial electron acceptors 2,6-dichlorophenolindophenol (DCPIP) or ferricyanide, but in vivo most likely transfer the electron pair from the reduced flavin to a component of the electron transport chain in the membrane, possibly a quinone. Shows very low activity with oxygen as the electron acceptor, and also with 3-indolelactate and medium chain 2-hydroxyacids as substrates. The protein is (S)-mandelate dehydrogenase of Pseudomonas putida (Arthrobacter siderocapsulatus).